A 486-amino-acid polypeptide reads, in one-letter code: Ribosomal RNA small subunit methyltransferase F (486 aa).

S-adenosyl-L-methionine-binding positions include 124 to 130 (ASAPGSK), Glu-148, Asp-175, and Asp-193. Cys-246 serves as the catalytic Nucleophile.

The protein belongs to the class I-like SAM-binding methyltransferase superfamily. RsmB/NOP family.

The protein resides in the cytoplasm. The catalysed reaction is cytidine(1407) in 16S rRNA + S-adenosyl-L-methionine = 5-methylcytidine(1407) in 16S rRNA + S-adenosyl-L-homocysteine + H(+). In terms of biological role, specifically methylates the cytosine at position 1407 (m5C1407) of 16S rRNA. This is Ribosomal RNA small subunit methyltransferase F from Shewanella baltica (strain OS185).